The sequence spans 351 residues: Centromere-binding protein 1 (351 aa).

Methionine 1 carries the N-acetylmethionine modification. Polar residues-rich tracts occupy residues 1–10 (MNSLANNNKL), 43–52 (LLSQESNDGN), and 65–77 (KGTQSQYESGLTS). 3 disordered regions span residues 1 to 164 (MNSL…TQQS), 196 to 233 (KKDISMQPGRRGRKPTTLATTDEWKKQRKDSHKEVERR), and 327 to 351 (YEDMHTHKKQENERKSTRSDNPHEA). Residue serine 45 is modified to Phosphoserine; by ATM or ATR. A Phosphoserine modification is found at serine 48. The residue at position 84 (serine 84) is a Phosphoserine. Polar residues-rich tracts occupy residues 100-124 (VNYTDLIQGQEDSSDAHTSNQTNAN) and 138-164 (TPSNEGVKPNTSLEGMTSSPMESTQQS). Phosphothreonine is present on threonine 138. The bHLH domain occupies 222–270 (QRKDSHKEVERRRRENINTAINVLSDLLPVRESSKAAILACAAEYIQKL).

In terms of assembly, binds DNA as a dimer. Associates with MET4 to form a heteromeric complex which also includes MET28.

The protein localises to the nucleus. Its subcellular location is the mitochondrion. The protein resides in the chromosome. It is found in the centromere. In terms of biological role, required for chromosome stability and methionine prototrophy. It is involved in chromosomal segregation. Binds to a highly conserved DNA sequence (5'-RTCACRTG-3'), called CDEI, found in centromeres and in several promoters. DNA-binding activity is enhanced by MET28. Required as an auxiliary factor for transcriptional activation of sulfur metabolism together with MET4 and MET28. In Saccharomyces cerevisiae (strain ATCC 204508 / S288c) (Baker's yeast), this protein is Centromere-binding protein 1 (CBF1).